The sequence spans 609 residues: Spore-specific protein YSW1 (609 aa).

The segment at 1 to 24 is disordered; that stretch reads MSSLADTVEGSEAKRGRFSNNALT. 2 positions are modified to phosphoserine: Ser-159 and Ser-160. The interval 162 to 225 is disordered; the sequence is DENESHFTDA…DDEFSPATPP (64 aa). A compositionally biased stretch (polar residues) spans 169 to 179; it reads TDANSHVMQSK. Over residues 200 to 209 the composition is skewed to basic and acidic residues; sequence LKKEYEKSFE. A compositionally biased stretch (acidic residues) spans 210–219; it reads EYSDDSDDEF.

The polypeptide is Spore-specific protein YSW1 (YSW1) (Saccharomyces cerevisiae (strain ATCC 204508 / S288c) (Baker's yeast)).